The primary structure comprises 522 residues: Maturase K (522 aa).

The protein belongs to the intron maturase 2 family. MatK subfamily.

The protein resides in the plastid. It is found in the chloroplast. Functionally, usually encoded in the trnK tRNA gene intron. Probably assists in splicing its own and other chloroplast group II introns. This Iris sanguinea (Japanese iris) protein is Maturase K.